We begin with the raw amino-acid sequence, 69 residues long: uncharacterized protein (69 aa).

Residues 1–15 are Cytoplasmic-facing; sequence MLLYIVIIVACIISK. Residues 16 to 36 form a helical membrane-spanning segment; sequence LVPNEYWAIHLFFIIMIFMVY. Topologically, residues 37-69 are extracellular; it reads MYKKLDIHQKYQFWNYTMSGLSGHNVQVTCKCY. An N-linked (GlcNAc...) asparagine; by host glycan is attached at asparagine 51.

The protein belongs to the asfivirus X69R family.

It localises to the host membrane. This is an uncharacterized protein from African swine fever virus (isolate Tick/Malawi/Lil 20-1/1983) (ASFV).